Consider the following 1178-residue polypeptide: DNA-directed RNA polymerase subunit beta' (1178 aa).

Residues Cys60, Cys62, Cys75, and Cys78 each contribute to the Zn(2+) site. Mg(2+) contacts are provided by Asp450, Asp452, and Asp454. Zn(2+) contacts are provided by Cys795, Cys869, Cys876, and Cys879.

Belongs to the RNA polymerase beta' chain family. The RNAP catalytic core consists of 2 alpha, 1 beta, 1 beta' and 1 omega subunit. When a sigma factor is associated with the core the holoenzyme is formed, which can initiate transcription. Mg(2+) is required as a cofactor. The cofactor is Zn(2+).

It catalyses the reaction RNA(n) + a ribonucleoside 5'-triphosphate = RNA(n+1) + diphosphate. In terms of biological role, DNA-dependent RNA polymerase catalyzes the transcription of DNA into RNA using the four ribonucleoside triphosphates as substrates. The polypeptide is DNA-directed RNA polymerase subunit beta' (Clostridium perfringens (strain ATCC 13124 / DSM 756 / JCM 1290 / NCIMB 6125 / NCTC 8237 / Type A)).